The primary structure comprises 439 residues: Casein kinase I homolog 3 (439 aa).

One can recognise a Protein kinase domain in the interval 15 to 286; that stretch reads YRVGKKIGEG…LRSLFDSLLL (272 aa). ATP-binding positions include 21 to 29 and K44; that span reads IGEGSFGML. Residue D134 is the Proton acceptor of the active site. A disordered region spans residues 366–426; the sequence is DGIPGKAASP…PSKEKSRKKF (61 aa). A compositionally biased stretch (low complexity) spans 372 to 413; that stretch reads AASPQVQQQQQTSSAQQQQPQRVEQPAPQTTQPTQVDTQQAA.

It belongs to the protein kinase superfamily. CK1 Ser/Thr protein kinase family. Casein kinase I subfamily.

The protein resides in the cytoplasm. The enzyme catalyses L-seryl-[protein] + ATP = O-phospho-L-seryl-[protein] + ADP + H(+). It carries out the reaction L-threonyl-[protein] + ATP = O-phospho-L-threonyl-[protein] + ADP + H(+). Its function is as follows. Casein kinases are operationally defined by their preferential utilization of acidic proteins such as caseins as substrates. The protein is Casein kinase I homolog 3 (cki3) of Schizosaccharomyces pombe (strain 972 / ATCC 24843) (Fission yeast).